Reading from the N-terminus, the 238-residue chain is Ribonuclease PH (238 aa).

Residues R86 and 124-126 (GTR) contribute to the phosphate site.

Belongs to the RNase PH family. In terms of assembly, homohexameric ring arranged as a trimer of dimers.

The enzyme catalyses tRNA(n+1) + phosphate = tRNA(n) + a ribonucleoside 5'-diphosphate. Functionally, phosphorolytic 3'-5' exoribonuclease that plays an important role in tRNA 3'-end maturation. Removes nucleotide residues following the 3'-CCA terminus of tRNAs; can also add nucleotides to the ends of RNA molecules by using nucleoside diphosphates as substrates, but this may not be physiologically important. Probably plays a role in initiation of 16S rRNA degradation (leading to ribosome degradation) during starvation. The sequence is that of Ribonuclease PH from Actinobacillus pleuropneumoniae serotype 5b (strain L20).